Consider the following 673-residue polypeptide: UvrABC system protein B (673 aa).

Residues 26–414 (ANFEAGLAKQ…AGEVTELVVR (389 aa)) form the Helicase ATP-binding domain. 39–46 (GVTGSGKT) lines the ATP pocket. The Beta-hairpin signature appears at 92–115 (YYDYYQPEAYVPSSDTFIEKDSSI). The region spanning 431–597 (QVDDLMSEVH…SVERPIADIM (167 aa)) is the Helicase C-terminal domain. Composition is skewed to basic and acidic residues over residues 600–609 (ARDDAAEKKS) and 618–628 (HVAEETPDYRA). A disordered region spans residues 600–628 (ARDDAAEKKSGKGRSKSRHVAEETPDYRA). The UVR domain occupies 635-670 (AGKLKSLEQKMYQHAKDLEFEAAAQIRDQIQKLKAA).

This sequence belongs to the UvrB family. In terms of assembly, forms a heterotetramer with UvrA during the search for lesions. Interacts with UvrC in an incision complex.

Its subcellular location is the cytoplasm. Functionally, the UvrABC repair system catalyzes the recognition and processing of DNA lesions. A damage recognition complex composed of 2 UvrA and 2 UvrB subunits scans DNA for abnormalities. Upon binding of the UvrA(2)B(2) complex to a putative damaged site, the DNA wraps around one UvrB monomer. DNA wrap is dependent on ATP binding by UvrB and probably causes local melting of the DNA helix, facilitating insertion of UvrB beta-hairpin between the DNA strands. Then UvrB probes one DNA strand for the presence of a lesion. If a lesion is found the UvrA subunits dissociate and the UvrB-DNA preincision complex is formed. This complex is subsequently bound by UvrC and the second UvrB is released. If no lesion is found, the DNA wraps around the other UvrB subunit that will check the other stand for damage. The sequence is that of UvrABC system protein B from Xanthomonas axonopodis pv. citri (strain 306).